A 224-amino-acid chain; its full sequence is Proline/serine-rich protein C17A5.10 (224 aa).

Residues 1–10 are compositionally biased toward pro residues; sequence MTDDSVPPPS. A disordered region spans residues 1–110; the sequence is MTDDSVPPPS…SNYNTAKPPY (110 aa). Residues 31–52 are compositionally biased toward low complexity; it reads TSTSAGHPSSSSSTLPNYAASS. Composition is skewed to polar residues over residues 53–68, 77–94, and 101–110; these read LNSR…NAYS, PTSQ…STMY, and SNYNTAKPPY.

It belongs to the HUA1 family.

Its subcellular location is the cytoplasm. Functionally, may be involved in assembly and disassembly of the actin cytoskeleton. The protein is Proline/serine-rich protein C17A5.10 of Schizosaccharomyces pombe (strain 972 / ATCC 24843) (Fission yeast).